A 169-amino-acid chain; its full sequence is Phosphopantetheine adenylyltransferase (169 aa).

Thr14 contributes to the substrate binding site. ATP is bound by residues 14–15 and His22; that span reads TF. Substrate contacts are provided by Lys46, Leu78, and Arg92. Residues 93–95, Glu103, and 128–134 each bind ATP; these read GLR and HSFISSS.

The protein belongs to the bacterial CoaD family. In terms of assembly, homohexamer. Mg(2+) serves as cofactor.

It localises to the cytoplasm. It carries out the reaction (R)-4'-phosphopantetheine + ATP + H(+) = 3'-dephospho-CoA + diphosphate. It participates in cofactor biosynthesis; coenzyme A biosynthesis; CoA from (R)-pantothenate: step 4/5. Functionally, reversibly transfers an adenylyl group from ATP to 4'-phosphopantetheine, yielding dephospho-CoA (dPCoA) and pyrophosphate. This Stenotrophomonas maltophilia (strain K279a) protein is Phosphopantetheine adenylyltransferase.